We begin with the raw amino-acid sequence, 260 residues long: NH(3)-dependent NAD(+) synthetase (260 aa).

31–38 (GLSGGLDS) is a binding site for ATP. Asp37 is a Mg(2+) binding site. Residue Arg112 coordinates deamido-NAD(+). Thr132 is a binding site for ATP. Glu137 provides a ligand contact to Mg(2+). 2 residues coordinate ATP: Lys161 and Ser183.

This sequence belongs to the NAD synthetase family. As to quaternary structure, homodimer.

It catalyses the reaction deamido-NAD(+) + NH4(+) + ATP = AMP + diphosphate + NAD(+) + H(+). It participates in cofactor biosynthesis; NAD(+) biosynthesis; NAD(+) from deamido-NAD(+) (ammonia route): step 1/1. Functionally, catalyzes the ATP-dependent amidation of deamido-NAD to form NAD. Uses ammonia as a nitrogen source. In Helicobacter pylori (strain HPAG1), this protein is NH(3)-dependent NAD(+) synthetase.